The sequence spans 647 residues: Threonine--tRNA ligase (647 aa).

The TGS domain occupies 1–61 (MIKITFPDGA…EEDGSIEIVT (61 aa)). The catalytic stretch occupies residues 240-538 (DHRKLGKELD…LIETYKGAFP (299 aa)). Zn(2+) contacts are provided by C334, H385, and H515.

The protein belongs to the class-II aminoacyl-tRNA synthetase family. As to quaternary structure, homodimer. It depends on Zn(2+) as a cofactor.

It is found in the cytoplasm. It catalyses the reaction tRNA(Thr) + L-threonine + ATP = L-threonyl-tRNA(Thr) + AMP + diphosphate + H(+). Its function is as follows. Catalyzes the attachment of threonine to tRNA(Thr) in a two-step reaction: L-threonine is first activated by ATP to form Thr-AMP and then transferred to the acceptor end of tRNA(Thr). Also edits incorrectly charged L-seryl-tRNA(Thr). The polypeptide is Threonine--tRNA ligase (Streptococcus agalactiae serotype III (strain NEM316)).